The sequence spans 487 residues: MQDAERTTNDPVDRIEKVTWRDLQDGSFTAELKRLICFAAPMAAVVIIQFMIQIISMVMVGHLGRLSLASASFAVSFCNVTGFSFIIGLSCALDTLSGQAYGAKLYRKLGVQAYTAMFCLTLVCLPLSLLWFNMGKLIVILGQDPAIAHEAGRYAAWLIPGLFAYAVLQPLIRYFKNQSLITPLLVTSSVVFCIHVPLCWLLVYKSGLGHIGGALALSLSYWLYAIFLGSFMYYSSACSETRAPLTMEIFEGVREFIKYALPSAAMLCLEWWSYELIILLSGLLPNPQLETSVLSICFETLSITYSIPLAIAAAASTRISNELGAGNSRAAHIVVYAAMSLAVMDALMVSMSLLAGRHVFGHVFSSDKKTIEYVAKMAPLVSISIILDSLQGVLSGVASGCGWQHIGAYINFGAFYLWGIPIAASLAFWVHLKGVGLWIGILAGAVLQTLLLALVTGCTNWKTQAREARERMAVAHESELTESELPI.

12 helical membrane passes run 35 to 55, 73 to 93, 122 to 142, 155 to 175, 184 to 204, 211 to 231, 264 to 284, 293 to 313, 333 to 353, 377 to 397, 412 to 432, and 435 to 455; these read LICF…IQII, FAVS…SCAL, LVCL…VILG, AAWL…IRYF, LLVT…LLVY, IGGA…LGSF, AAML…SGLL, VLSI…AIAA, IVVY…SMSL, MAPL…LSGV, FGAF…WVHL, and VGLW…LALV.

Belongs to the multi antimicrobial extrusion (MATE) (TC 2.A.66.1) family.

It is found in the membrane. In Arabidopsis thaliana (Mouse-ear cress), this protein is Protein DETOXIFICATION 10.